We begin with the raw amino-acid sequence, 360 residues long: Photosystem II protein D1 (360 aa).

Transmembrane regions (helical) follow at residues 29 to 46 (YIGWFGVLMIPCLLTATT), 118 to 133 (HFLLGVAAYMGREWEL), and 142 to 156 (WICVAFSAPVAAATA). H118 is a binding site for chlorophyll a. Residue Y126 coordinates pheophytin a. Residues D170 and E189 each coordinate [CaMn4O5] cluster. The chain crosses the membrane as a helical span at residues 197–218 (FHMAGVAGVFGGALFSAMHGSL). Residue H198 coordinates chlorophyll a. A quinone is bound by residues H215 and 264-265 (SF). Position 215 (H215) interacts with Fe cation. Fe cation is bound at residue H272. Residues 274–288 (FLGLWPVVGIWLTSI) form a helical membrane-spanning segment. [CaMn4O5] cluster-binding residues include H332, E333, D342, and A344. Residues 345-360 (DNSLLPVASSSPSINS) constitute a propeptide that is removed on maturation.

It belongs to the reaction center PufL/M/PsbA/D family. In terms of assembly, PSII is composed of 1 copy each of membrane proteins PsbA, PsbB, PsbC, PsbD, PsbE, PsbF, PsbH, PsbI, PsbJ, PsbK, PsbL, PsbM, PsbT, PsbY, PsbZ, Psb30/Ycf12, at least 3 peripheral proteins of the oxygen-evolving complex and a large number of cofactors. It forms dimeric complexes. The D1/D2 heterodimer binds P680, chlorophylls that are the primary electron donor of PSII, and subsequent electron acceptors. It shares a non-heme iron and each subunit binds pheophytin, quinone, additional chlorophylls, carotenoids and lipids. D1 provides most of the ligands for the Mn4-Ca-O5 cluster of the oxygen-evolving complex (OEC). There is also a Cl(-1) ion associated with D1 and D2, which is required for oxygen evolution. The PSII complex binds additional chlorophylls, carotenoids and specific lipids. serves as cofactor. In terms of processing, tyr-161 forms a radical intermediate that is referred to as redox-active TyrZ, YZ or Y-Z.

The protein localises to the plastid. It localises to the chloroplast thylakoid membrane. It carries out the reaction 2 a plastoquinone + 4 hnu + 2 H2O = 2 a plastoquinol + O2. Its function is as follows. Photosystem II (PSII) is a light-driven water:plastoquinone oxidoreductase that uses light energy to abstract electrons from H(2)O, generating O(2) and a proton gradient subsequently used for ATP formation. It consists of a core antenna complex that captures photons, and an electron transfer chain that converts photonic excitation into a charge separation. The D1/D2 (PsbA/PsbD) reaction center heterodimer binds P680, the primary electron donor of PSII as well as several subsequent electron acceptors. The chain is Photosystem II protein D1 from Cyanidium caldarium (Red alga).